The following is a 37-amino-acid chain: Large ribosomal subunit protein bL36c (37 aa).

The protein belongs to the bacterial ribosomal protein bL36 family.

The protein localises to the plastid. It localises to the chloroplast. This chain is Large ribosomal subunit protein bL36c, found in Chara vulgaris (Common stonewort).